The primary structure comprises 344 residues: tRNA N6-adenosine threonylcarbamoyltransferase (344 aa).

Fe cation-binding residues include His-119 and His-123. Substrate contacts are provided by residues Val-141 to Gly-145, Asp-174, Gly-187, Asp-191, and Asn-280. Asp-310 contacts Fe cation.

Belongs to the KAE1 / TsaD family. Fe(2+) is required as a cofactor.

Its subcellular location is the cytoplasm. It carries out the reaction L-threonylcarbamoyladenylate + adenosine(37) in tRNA = N(6)-L-threonylcarbamoyladenosine(37) in tRNA + AMP + H(+). In terms of biological role, required for the formation of a threonylcarbamoyl group on adenosine at position 37 (t(6)A37) in tRNAs that read codons beginning with adenine. Is involved in the transfer of the threonylcarbamoyl moiety of threonylcarbamoyl-AMP (TC-AMP) to the N6 group of A37, together with TsaE and TsaB. TsaD likely plays a direct catalytic role in this reaction. In Listeria welshimeri serovar 6b (strain ATCC 35897 / DSM 20650 / CCUG 15529 / CIP 8149 / NCTC 11857 / SLCC 5334 / V8), this protein is tRNA N6-adenosine threonylcarbamoyltransferase.